The chain runs to 341 residues: Serine/threonine-protein kinase PDIK1L (341 aa).

Positions 8–334 (YDLIREVGRG…LELRLVQIAF (327 aa)) constitute a Protein kinase domain. ATP is bound by residues 14 to 22 (VGRGSYGVV) and K37. D164 (proton acceptor) is an active-site residue.

Belongs to the protein kinase superfamily. Ser/Thr protein kinase family.

It is found in the nucleus. It catalyses the reaction L-seryl-[protein] + ATP = O-phospho-L-seryl-[protein] + ADP + H(+). The catalysed reaction is L-threonyl-[protein] + ATP = O-phospho-L-threonyl-[protein] + ADP + H(+). This chain is Serine/threonine-protein kinase PDIK1L (Pdik1l), found in Mus musculus (Mouse).